Here is a 374-residue protein sequence, read N- to C-terminus: Tuliposide A-converting enzyme b1, amyloplastic (374 aa).

The N-terminal 68 residues, 1–68 (MSVALFCGPP…TNSSLSPSPT (68 aa)), are a transit peptide targeting the amyloplast. S226 functions as the Acyl-ester intermediate in the catalytic mechanism. Residues D316 and H348 each act as charge relay system in the active site.

It belongs to the AB hydrolase superfamily. Homodimer. In terms of tissue distribution, highly expressed in pistil and bulb scales. Lower expression in stem, and barely detected in root, leaf, petal and stamen.

The protein localises to the plastid. It localises to the amyloplast. The catalysed reaction is 6-tuliposide A = tulipalin A + D-glucose. In terms of biological role, lactone-forming carboxylesterases, specifically catalyzing intramolecular transesterification, but not hydrolysis. Involved in the biosynthesis of tulipalins, defensive chemicals that show antimicrobial activities against a broad range of strains of bacteria and fungi. Substrates are 6-tuliposide A &gt; 6-tuliposide B. The chain is Tuliposide A-converting enzyme b1, amyloplastic (TCEA-B1) from Tulipa gesneriana (Garden tulip).